The sequence spans 469 residues: Argininosuccinate lyase (469 aa).

Belongs to the lyase 1 family. Argininosuccinate lyase subfamily.

The protein localises to the cytoplasm. It catalyses the reaction 2-(N(omega)-L-arginino)succinate = fumarate + L-arginine. It participates in amino-acid biosynthesis; L-arginine biosynthesis; L-arginine from L-ornithine and carbamoyl phosphate: step 3/3. The chain is Argininosuccinate lyase from Burkholderia cenocepacia (strain HI2424).